Reading from the N-terminus, the 141-residue chain is Large ribosomal subunit protein uL11 (141 aa).

It belongs to the universal ribosomal protein uL11 family. In terms of assembly, part of the ribosomal stalk of the 50S ribosomal subunit. Interacts with L10 and the large rRNA to form the base of the stalk. L10 forms an elongated spine to which L12 dimers bind in a sequential fashion forming a multimeric L10(L12)X complex. One or more lysine residues are methylated.

Its function is as follows. Forms part of the ribosomal stalk which helps the ribosome interact with GTP-bound translation factors. The chain is Large ribosomal subunit protein uL11 from Synechococcus elongatus (strain ATCC 33912 / PCC 7942 / FACHB-805) (Anacystis nidulans R2).